Consider the following 641-residue polypeptide: Phosphomethylpyrimidine synthase (641 aa).

Substrate-binding positions include Asn-221, Met-250, Tyr-279, His-315, 335-337 (SRG), 376-379 (DGLR), and Glu-415. His-419 contributes to the Zn(2+) binding site. Residue Tyr-442 coordinates substrate. A Zn(2+)-binding site is contributed by His-483. Cys-563, Cys-566, and Cys-571 together coordinate [4Fe-4S] cluster.

It belongs to the ThiC family. Homodimer. The cofactor is [4Fe-4S] cluster.

It catalyses the reaction 5-amino-1-(5-phospho-beta-D-ribosyl)imidazole + S-adenosyl-L-methionine = 4-amino-2-methyl-5-(phosphooxymethyl)pyrimidine + CO + 5'-deoxyadenosine + formate + L-methionine + 3 H(+). It participates in cofactor biosynthesis; thiamine diphosphate biosynthesis. Its function is as follows. Catalyzes the synthesis of the hydroxymethylpyrimidine phosphate (HMP-P) moiety of thiamine from aminoimidazole ribotide (AIR) in a radical S-adenosyl-L-methionine (SAM)-dependent reaction. The polypeptide is Phosphomethylpyrimidine synthase (Rhodopseudomonas palustris (strain BisA53)).